Here is a 103-residue protein sequence, read N- to C-terminus: Histone H4 (103 aa).

The segment covering 1-14 has biased composition (gly residues); the sequence is MSGRGKGGKGLGKG. A disordered region spans residues 1–20; the sequence is MSGRGKGGKGLGKGGAKRHR. N6-(2-hydroxyisobutyryl)lysine; alternate occurs at positions 6, 9, 13, 17, 32, and 45. Residue Lys-6 is modified to N6-acetyl-N6-methyllysine; alternate. N6-butyryllysine; alternate occurs at positions 6, 9, 13, 17, 32, and 45. Lys-6 bears the N6-glutaryllysine; alternate mark. Residue Lys-9 is modified to N6-propionyllysine; alternate. N6-acetyl-N6-methyllysine; alternate is present on Lys-13. Position 13 is an N6-glutaryllysine; alternate (Lys-13). An N6-propionyllysine; alternate mark is found at Lys-17, Lys-32, and Lys-45. A DNA-binding region spans residues 17-21; it reads KRHRK. N6-glutaryllysine; alternate is present on Lys-32. Lys-32 carries the N6-succinyllysine; alternate modification. Lys-60, Lys-78, Lys-80, and Lys-92 each carry N6-glutaryllysine; alternate. Lys-60 bears the N6-(2-hydroxyisobutyryl)lysine mark. 3 positions are modified to N6-(2-hydroxyisobutyryl)lysine; alternate: Lys-78, Lys-80, and Lys-92. Lys-78, Lys-80, and Lys-92 each carry N6-butyryllysine; alternate. Residues Lys-78, Lys-80, and Lys-92 each carry the N6-propionyllysine; alternate modification. Lys-78 carries the post-translational modification N6-succinyllysine. An N6-succinyllysine; alternate modification is found at Lys-92.

The protein belongs to the histone H4 family. The nucleosome is a histone octamer containing two molecules each of H2A, H2B, H3 and H4 assembled in one H3-H4 heterotetramer and two H2A-H2B heterodimers. The octamer wraps approximately 147 bp of DNA. Post-translationally, butyrylation of histones marks active promoters and competes with histone acetylation. In terms of processing, glutarylation at Lys-92 (H4K91glu) destabilizes nucleosomes by promoting dissociation of the H2A-H2B dimers from nucleosomes.

It localises to the nucleus. It is found in the chromosome. Functionally, core component of nucleosome. Nucleosomes wrap and compact DNA into chromatin, limiting DNA accessibility to the cellular machineries which require DNA as a template. Histones thereby play a central role in transcription regulation, DNA repair, DNA replication and chromosomal stability. DNA accessibility is regulated via a complex set of post-translational modifications of histones, also called histone code, and nucleosome remodeling. This is Histone H4 (H4.1) from Oikopleura dioica (Tunicate).